A 542-amino-acid chain; its full sequence is CTP synthase (542 aa).

The interval 1-265 is amidoligase domain; that stretch reads MTRYVFITGG…DREVLGHFGL (265 aa). Ser13 is a CTP binding site. Ser13 provides a ligand contact to UTP. ATP contacts are provided by residues 14–19 and Asp71; that span reads SLGKGL. The Mg(2+) site is built by Asp71 and Glu139. CTP-binding positions include 146-148, 186-191, and Lys222; these read DIE and KTKPTQ. UTP-binding positions include 186–191 and Lys222; that span reads KTKPTQ. The Glutamine amidotransferase type-1 domain maps to 291–541; it reads SIAIVGKYTG…VGAAIEQSRL (251 aa). Gly353 provides a ligand contact to L-glutamine. The active-site Nucleophile; for glutamine hydrolysis is the Cys380. L-glutamine is bound by residues 381–384, Glu404, and Arg469; that span reads FGMQ. Residues His514 and Glu516 contribute to the active site.

Belongs to the CTP synthase family. Homotetramer.

The catalysed reaction is UTP + L-glutamine + ATP + H2O = CTP + L-glutamate + ADP + phosphate + 2 H(+). The enzyme catalyses L-glutamine + H2O = L-glutamate + NH4(+). It carries out the reaction UTP + NH4(+) + ATP = CTP + ADP + phosphate + 2 H(+). The protein operates within pyrimidine metabolism; CTP biosynthesis via de novo pathway; CTP from UDP: step 2/2. Its activity is regulated as follows. Allosterically activated by GTP, when glutamine is the substrate; GTP has no effect on the reaction when ammonia is the substrate. The allosteric effector GTP functions by stabilizing the protein conformation that binds the tetrahedral intermediate(s) formed during glutamine hydrolysis. Inhibited by the product CTP, via allosteric rather than competitive inhibition. Its function is as follows. Catalyzes the ATP-dependent amination of UTP to CTP with either L-glutamine or ammonia as the source of nitrogen. Regulates intracellular CTP levels through interactions with the four ribonucleotide triphosphates. This Methylobacterium radiotolerans (strain ATCC 27329 / DSM 1819 / JCM 2831 / NBRC 15690 / NCIMB 10815 / 0-1) protein is CTP synthase.